The following is a 496-amino-acid chain: Cyclin-dependent kinase 16 (496 aa).

A disordered region spans residues 1–95; that stretch reads MDRMKKIKRQ…SATSSDEVQS (95 aa). A Phosphoserine; by BRSK2 modification is found at S12. S36, S42, S64, S65, S78, S82, and S89 each carry phosphoserine. The span at 69–78 shows a compositional bias: basic and acidic residues; the sequence is IVHEDMKMGS. The span at 83–93 shows a compositional bias: polar residues; the sequence is DQASATSSDEV. S95 is modified (phosphoserine; by CDK5). 6 positions are modified to phosphoserine: S110, S119, S138, S146, S153, and S155. A Protein kinase domain is found at 165 to 446; sequence YIKLDKLGEG…AEDARKHPFF (282 aa). Residues 171-179 and K194 contribute to the ATP site; that span reads LGEGTYATV. T175 bears the Phosphothreonine mark. Residue D286 is the Proton acceptor of the active site. At T380 the chain carries Phosphothreonine. Phosphoserine occurs at positions 391, 478, and 480.

It belongs to the protein kinase superfamily. CMGC Ser/Thr protein kinase family. CDC2/CDKX subfamily. In terms of assembly, found in a complex containing CABLES1, CDK17 and TDRD7. Interacts with BRSK2. Identified in a complex with NSF, syntaxin-1, synaptotagmin, SYN1, SYP and CDK5R1. Interacts with YWHAH, YWHAQ and YWHAZ. Interacts with CCNY; this interaction increases the CDK16 kinase activity. Interacts with CCNYL1; this interaction mutually increases the stability of CDK16 and CCNYL1 and increases the kinase activity of CDK16. Interacts with NSF. In terms of processing, phosphorylation of CDK16 is essential for the binding of CCNY, but also essential for the regulation of CDK16 kinase activity. Phosphorylation of CDK16 is essential for the binding of CCNYl1, but also essential for the regulation of CDK16 kinase activity. Ser-146 and Ser-153 are the critical sites for the binding of CCNYL1 and for modulating CDK16 kinase activity. Phosphorylation at Ser-153 inhibits kinase activity. Highly expressed in testis and brain, and detected at lower levels in heart, skeletal muscle, adipose tissue, lung, spleen and pancreas (at protein level). Ubiquitous with highest levels in testis and brain, with longer form predominant in all tissues except the testis.

It localises to the cytoplasm. It is found in the cytoplasmic vesicle. The protein localises to the secretory vesicle. Its subcellular location is the cell membrane. The protein resides in the synapse. It localises to the synaptosome. The enzyme catalyses L-seryl-[protein] + ATP = O-phospho-L-seryl-[protein] + ADP + H(+). It carries out the reaction L-threonyl-[protein] + ATP = O-phospho-L-threonyl-[protein] + ADP + H(+). Functionally, protein kinase that plays a role in vesicle-mediated transport processes and exocytosis. Can phosphorylate CCNY at 'Ser-336' (in vitro). Plays a role in the regulation of insulin secretion in response to changes in blood glucose levels. Regulates GH1 release by brain neurons. Phosphorylates NSF, and thereby regulates NSF oligomerization. Required for normal spermatogenesis. Regulates neuron differentiation and dendrite development. The protein is Cyclin-dependent kinase 16 (Cdk16) of Mus musculus (Mouse).